Consider the following 154-residue polypeptide: Myoglobin (154 aa).

The Globin domain occupies 2–148 (VLSEGEWQLV…FRKDIAAKYK (147 aa)). Position 4 is a phosphoserine (serine 4). A nitrite-binding site is contributed by histidine 65. Histidine 65 serves as a coordination point for O2. Position 68 is a phosphothreonine (threonine 68). Heme b is bound at residue histidine 94.

This sequence belongs to the globin family. Monomeric.

Its subcellular location is the cytoplasm. The protein resides in the sarcoplasm. It catalyses the reaction Fe(III)-heme b-[protein] + nitric oxide + H2O = Fe(II)-heme b-[protein] + nitrite + 2 H(+). It carries out the reaction H2O2 + AH2 = A + 2 H2O. Functionally, monomeric heme protein which primary function is to store oxygen and facilitate its diffusion within muscle tissues. Reversibly binds oxygen through a pentacoordinated heme iron and enables its timely and efficient release as needed during periods of heightened demand. Depending on the oxidative conditions of tissues and cells, and in addition to its ability to bind oxygen, it also has a nitrite reductase activity whereby it regulates the production of bioactive nitric oxide. Under stress conditions, like hypoxia and anoxia, it also protects cells against reactive oxygen species thanks to its pseudoperoxidase activity. In Physeter macrocephalus (Sperm whale), this protein is Myoglobin (MB).